The primary structure comprises 242 residues: Uridylate kinase (242 aa).

An ATP-binding site is contributed by 12-15; sequence KLSG. Residues 20–25 are involved in allosteric activation by GTP; the sequence is GEKGYG. Residue G55 coordinates UMP. ATP contacts are provided by G56 and R60. UMP is bound by residues D75 and 136–143; that span reads TGNPYFST. 2 residues coordinate ATP: Y169 and D172.

Belongs to the UMP kinase family. In terms of assembly, homohexamer.

It localises to the cytoplasm. It catalyses the reaction UMP + ATP = UDP + ADP. It functions in the pathway pyrimidine metabolism; CTP biosynthesis via de novo pathway; UDP from UMP (UMPK route): step 1/1. Its activity is regulated as follows. Allosterically activated by GTP. Inhibited by UTP. Its function is as follows. Catalyzes the reversible phosphorylation of UMP to UDP. In Carboxydothermus hydrogenoformans (strain ATCC BAA-161 / DSM 6008 / Z-2901), this protein is Uridylate kinase.